A 304-amino-acid chain; its full sequence is Putative S-adenosyl-L-methionine-dependent methyltransferase MSMEG_1482/MSMEI_1446 (304 aa).

S-adenosyl-L-methionine contacts are provided by residues aspartate 130 and 159-160; that span reads DL.

Belongs to the UPF0677 family.

Exhibits S-adenosyl-L-methionine-dependent methyltransferase activity. This Mycolicibacterium smegmatis (strain ATCC 700084 / mc(2)155) (Mycobacterium smegmatis) protein is Putative S-adenosyl-L-methionine-dependent methyltransferase MSMEG_1482/MSMEI_1446.